Reading from the N-terminus, the 277-residue chain is Nudix hydrolase 10 (277 aa).

In terms of domain architecture, Nudix hydrolase spans 97-235; that stretch reads WIPEAESTIP…KNDLFKDIHH (139 aa). The short motif at 142 to 163 is the Nudix box element; that stretch reads GVVDEGEEIFAAAIREVKEETG. 2 residues coordinate Mg(2+): E157 and E161.

It belongs to the Nudix hydrolase family. It depends on Mg(2+) as a cofactor. Mn(2+) is required as a cofactor. As to expression, expressed in roots, stems and, at lower level, leaves.

It carries out the reaction ADP-D-ribose + H2O = D-ribose 5-phosphate + AMP + 2 H(+). It catalyses the reaction NAD(+) + H2O = beta-nicotinamide D-ribonucleotide + AMP + 2 H(+). The enzyme catalyses NADH + H2O = reduced beta-nicotinamide D-ribonucleotide + AMP + 2 H(+). Functionally, may mediate the hydrolysis of some nucleoside diphosphate derivatives. In vitro, uses both ADP-ribose and NADH as substrates; however the relevance of such substrates in vivo is unclear. In Arabidopsis thaliana (Mouse-ear cress), this protein is Nudix hydrolase 10 (NUDT10).